The sequence spans 99 residues: Cell division protein FtsB (99 aa).

At 1–3 (MKF) the chain is on the cytoplasmic side. A helical membrane pass occupies residues 4 to 21 (FVITLIVLLGLLQYRLWS). Residues 22–99 (GDNSLPEYFV…GDRAVSSPSQ (78 aa)) are Periplasmic-facing. The stretch at 31-73 (VLQKQIAAQQDGNAKLNERNQVLKEEIIDLKSGTEAIEERARN) forms a coiled coil.

The protein belongs to the FtsB family. Part of a complex composed of FtsB, FtsL and FtsQ.

The protein localises to the cell inner membrane. Functionally, essential cell division protein. May link together the upstream cell division proteins, which are predominantly cytoplasmic, with the downstream cell division proteins, which are predominantly periplasmic. The chain is Cell division protein FtsB from Shewanella oneidensis (strain ATCC 700550 / JCM 31522 / CIP 106686 / LMG 19005 / NCIMB 14063 / MR-1).